Consider the following 539-residue polypeptide: Copine-C (539 aa).

C2 domains lie at 1–120 (MIPS…KIVA) and 128–251 (VTGK…PLIN). Residues L23, D24, D30, D83, D85, and D98 each contribute to the Ca(2+) site. A VWFA domain is found at 290–507 (SLMTAIDCTG…ALAQETLKEI (218 aa)).

The protein belongs to the copine family. The cofactor is Ca(2+).

The polypeptide is Copine-C (cpnC) (Dictyostelium discoideum (Social amoeba)).